A 632-amino-acid chain; its full sequence is Extracellular metalloproteinase 1 (632 aa).

The first 19 residues, 1–19, serve as a signal peptide directing secretion; sequence MHGLLLAAGLISLPLHVLA. Residues 20-246 constitute a propeptide that is removed on maturation; that stretch reads HPQPSSTSLA…VVDYVAHATF (227 aa). Asn-284 is a glycosylation site (N-linked (GlcNAc...) asparagine). Zn(2+) is bound at residue Thr-430. Residue His-431 is part of the active site. Zn(2+) is bound at residue Ser-434. An N-linked (GlcNAc...) asparagine glycan is attached at Asn-591.

This sequence belongs to the peptidase M36 family. The cofactor is Zn(2+).

The protein resides in the secreted. With respect to regulation, PMSF, soybean trypsin inhibitor (SBTI) and chymostatin strongly inhibit the proteinase. Secreted metalloproteinase probably acting as a virulence factor. This is Extracellular metalloproteinase 1 (MEP1) from Arthroderma otae (Microsporum canis).